The sequence spans 196 residues: Elongation factor Ts (196 aa).

The segment at 80–83 is involved in Mg(2+) ion dislocation from EF-Tu; that stretch reads TDFV.

It belongs to the EF-Ts family.

The protein resides in the cytoplasm. Its function is as follows. Associates with the EF-Tu.GDP complex and induces the exchange of GDP to GTP. It remains bound to the aminoacyl-tRNA.EF-Tu.GTP complex up to the GTP hydrolysis stage on the ribosome. This is Elongation factor Ts from Desulfotalea psychrophila (strain LSv54 / DSM 12343).